The primary structure comprises 172 residues: Large ribosomal subunit protein uL10 (172 aa).

It belongs to the universal ribosomal protein uL10 family. As to quaternary structure, part of the ribosomal stalk of the 50S ribosomal subunit. The N-terminus interacts with L11 and the large rRNA to form the base of the stalk. The C-terminus forms an elongated spine to which L12 dimers bind in a sequential fashion forming a multimeric L10(L12)X complex.

Functionally, forms part of the ribosomal stalk, playing a central role in the interaction of the ribosome with GTP-bound translation factors. This is Large ribosomal subunit protein uL10 from Beijerinckia indica subsp. indica (strain ATCC 9039 / DSM 1715 / NCIMB 8712).